We begin with the raw amino-acid sequence, 68 residues long: Large ribosomal subunit protein bL28 (68 aa).

A disordered region spans residues Met-1–Glu-30. The span at Gln-13–Asn-22 shows a compositional bias: polar residues.

Belongs to the bacterial ribosomal protein bL28 family.

In Solidesulfovibrio magneticus (strain ATCC 700980 / DSM 13731 / RS-1) (Desulfovibrio magneticus), this protein is Large ribosomal subunit protein bL28.